The sequence spans 250 residues: NAD(P)H-quinone oxidoreductase subunit K (250 aa).

[4Fe-4S] cluster is bound by residues cysteine 63, cysteine 64, cysteine 128, and cysteine 159.

Belongs to the complex I 20 kDa subunit family. In terms of assembly, NDH-1 can be composed of about 15 different subunits; different subcomplexes with different compositions have been identified which probably have different functions. It depends on [4Fe-4S] cluster as a cofactor.

Its subcellular location is the cellular thylakoid membrane. It carries out the reaction a plastoquinone + NADH + (n+1) H(+)(in) = a plastoquinol + NAD(+) + n H(+)(out). It catalyses the reaction a plastoquinone + NADPH + (n+1) H(+)(in) = a plastoquinol + NADP(+) + n H(+)(out). In terms of biological role, NDH-1 shuttles electrons from an unknown electron donor, via FMN and iron-sulfur (Fe-S) centers, to quinones in the respiratory and/or the photosynthetic chain. The immediate electron acceptor for the enzyme in this species is believed to be plastoquinone. Couples the redox reaction to proton translocation, and thus conserves the redox energy in a proton gradient. Cyanobacterial NDH-1 also plays a role in inorganic carbon-concentration. In Rippkaea orientalis (strain PCC 8801 / RF-1) (Cyanothece sp. (strain PCC 8801)), this protein is NAD(P)H-quinone oxidoreductase subunit K.